The primary structure comprises 399 residues: Glucose-1-phosphate adenylyltransferase (399 aa).

Residues Gly158, 174-175, and Ser192 contribute to the alpha-D-glucose 1-phosphate site; that span reads EK.

The protein belongs to the bacterial/plant glucose-1-phosphate adenylyltransferase family. As to quaternary structure, homotetramer.

The catalysed reaction is alpha-D-glucose 1-phosphate + ATP + H(+) = ADP-alpha-D-glucose + diphosphate. The protein operates within glycan biosynthesis; glycogen biosynthesis. Functionally, involved in the biosynthesis of ADP-glucose, a building block required for the elongation reactions to produce glycogen. Catalyzes the reaction between ATP and alpha-D-glucose 1-phosphate (G1P) to produce pyrophosphate and ADP-Glc. In Streptomyces coelicolor (strain ATCC BAA-471 / A3(2) / M145), this protein is Glucose-1-phosphate adenylyltransferase.